The following is an 88-amino-acid chain: Phosphocarrier protein HPr (88 aa).

The HPr domain occupies 2–88 (AQKTFKVTAD…ETMKSEGLGE (87 aa)). Ser12 is modified (phosphoserine). His15 (pros-phosphohistidine intermediate; alternate) is an active-site residue. The residue at position 15 (His15) is a Tele-phosphohistidine; alternate. The residue at position 46 (Ser46) is a Phosphoserine; by HPrK/P.

It belongs to the HPr family. In terms of processing, phosphorylated during sporulation.

It is found in the cytoplasm. With respect to regulation, phosphorylation on Ser-46 inhibits the phosphoryl transfer from enzyme I to HPr. Functionally, general (non sugar-specific) component of the phosphoenolpyruvate-dependent sugar phosphotransferase system (sugar PTS). This major carbohydrate active-transport system catalyzes the phosphorylation of incoming sugar substrates concomitantly with their translocation across the cell membrane. The phosphoryl group from phosphoenolpyruvate (PEP) is transferred to the phosphoryl carrier protein HPr by enzyme I. Phospho-HPr then transfers it to the PTS EIIA domain. P-Ser-HPr interacts with the catabolite control protein A (CcpA), forming a complex that binds to DNA at the catabolite response elements cre, operator sites preceding a large number of catabolite-regulated genes. Thus, P-Ser-HPr is a corepressor in carbon catabolite repression (CCR), a mechanism that allows bacteria to coordinate and optimize the utilization of available carbon sources. P-Ser-HPr also plays a role in inducer exclusion, in which it probably interacts with several non-PTS permeases and inhibits their transport activity. The chain is Phosphocarrier protein HPr (ptsH) from Bacillus subtilis (strain 168).